The primary structure comprises 290 residues: Carbonic anhydrase-related protein (290 aa).

A disordered region spans residues 1–26 (MADLSFIEDTVAFPEKEEDEEEEEEG). Phosphoserine is present on Ser5. The span at 16–26 (KEEDEEEEEEG) shows a compositional bias: acidic residues. Positions 27-289 (VEWGYEEGVE…LSDRVIRAAF (263 aa)) constitute an Alpha-carbonic anhydrase domain. His87 (proton donor/acceptor) is an active-site residue. Zn(2+)-binding residues include His118 and His141.

This sequence belongs to the alpha-carbonic anhydrase family.

Does not have a carbonic anhydrase catalytic activity. This chain is Carbonic anhydrase-related protein (CA8), found in Homo sapiens (Human).